Consider the following 127-residue polypeptide: Ribonuclease VapC9 (127 aa).

The PINc domain occupies 2 to 115 (IVVDASAALA…VTADLRLSDT (114 aa)). The Mg(2+) site is built by Asp-5 and Asp-91.

The protein belongs to the PINc/VapC protein family. Mg(2+) is required as a cofactor.

In terms of biological role, toxic component of a type II toxin-antitoxin (TA) system. An RNase. The cognate antitoxin is VapB9. This is Ribonuclease VapC9 from Mycobacterium tuberculosis (strain CDC 1551 / Oshkosh).